A 118-amino-acid chain; its full sequence is UPF0251 protein Teth39_0655 (118 aa).

The protein belongs to the UPF0251 family.

The polypeptide is UPF0251 protein Teth39_0655 (Thermoanaerobacter pseudethanolicus (strain ATCC 33223 / 39E) (Clostridium thermohydrosulfuricum)).